The chain runs to 322 residues: Cytochrome c biogenesis protein CcsA (322 aa).

The next 8 membrane-spanning stretches (helical) occupy residues 9–29, 44–64, 71–91, 98–118, 143–163, 226–246, 253–273, and 287–307; these read ILTHISFSIVSIVITLHLITL, GMIATFLCLTGLLITRWIYSG, LYESFIFLSWSFSLIHIVPYF, LTTITASSTIFTQGFATSGLL, MILSYAALLCGSLLSVALLVI, VISLGFIFLTIGILSGAVWAN, WSWDPKETWAFITWIVFAIYL, and AIVATLGFLIIWICYFGVNLL.

It belongs to the CcmF/CycK/Ccl1/NrfE/CcsA family. In terms of assembly, may interact with Ccs1.

The protein resides in the plastid. It is found in the chloroplast thylakoid membrane. Functionally, required during biogenesis of c-type cytochromes (cytochrome c6 and cytochrome f) at the step of heme attachment. The polypeptide is Cytochrome c biogenesis protein CcsA (Guizotia abyssinica (Niger)).